A 254-amino-acid chain; its full sequence is Photosystem II 22 kDa protein 2, chloroplastic (254 aa).

The N-terminal 38 residues, 1–38, are a transit peptide targeting the chloroplast; that stretch reads MALQQSMAMPMMVVSDLGTAPRSSPMVQLQRMKKHLVV. 2 repeat units span residues 42–148 and 149–253. 4 consecutive transmembrane segments (helical) span residues 86–106, 120–140, 184–204, and 219–239; these read VAML…KGIL, AEPL…GALG, LFVG…EIIT, and PINE…FAAI.

The protein belongs to the ELIP/psbS family.

It is found in the plastid. It localises to the chloroplast thylakoid membrane. In terms of biological role, involved in high light-mediated energy-dependent nonphotochemical quenching (NPQ, qE) and thermal dissipation (TD) thus regulating energy conversion in photosystem II and protecting from photoinhibition. Also seems to regulate quantum yield of electron transport in fluctuating light conditions. The protein is Photosystem II 22 kDa protein 2, chloroplastic of Oryza sativa subsp. japonica (Rice).